The chain runs to 280 residues: Energy-coupling factor transporter ATP-binding protein EcfA (280 aa).

Residues 5–240 (IDVKNLTYKY…DEMLKLTGLE (236 aa)) enclose the ABC transporter domain. 40 to 47 (GHNGSGKS) contacts ATP.

This sequence belongs to the ABC transporter superfamily. Energy-coupling factor EcfA family. In terms of assembly, forms a stable energy-coupling factor (ECF) transporter complex composed of 2 membrane-embedded substrate-binding proteins (S component), 2 ATP-binding proteins (A component) and 2 transmembrane proteins (T component).

The protein localises to the cell membrane. Its function is as follows. ATP-binding (A) component of a common energy-coupling factor (ECF) ABC-transporter complex. Unlike classic ABC transporters this ECF transporter provides the energy necessary to transport a number of different substrates. This chain is Energy-coupling factor transporter ATP-binding protein EcfA, found in Pediococcus pentosaceus (strain ATCC 25745 / CCUG 21536 / LMG 10740 / 183-1w).